The following is a 217-amino-acid chain: LexA repressor (217 aa).

The H-T-H motif DNA-binding region spans 26 to 46 (FEEMKLALDLKSKSGIHRLIK). Active-site for autocatalytic cleavage activity residues include serine 138 and lysine 176.

The protein belongs to the peptidase S24 family. As to quaternary structure, homodimer.

The catalysed reaction is Hydrolysis of Ala-|-Gly bond in repressor LexA.. In terms of biological role, represses a number of genes involved in the response to DNA damage (SOS response), including recA and lexA. In the presence of single-stranded DNA, RecA interacts with LexA causing an autocatalytic cleavage which disrupts the DNA-binding part of LexA, leading to derepression of the SOS regulon and eventually DNA repair. The sequence is that of LexA repressor from Zymomonas mobilis subsp. mobilis (strain ATCC 31821 / ZM4 / CP4).